A 320-amino-acid polypeptide reads, in one-letter code: MSKSESPKEPEQLRKLFIGGLSFETTDESLRSHFEQWGTLTDCVVMRDPNTKRSRGFGFVTYATVEEVDAAMNARPHKVDGRVVEPKRAVSREDSQRPGAHLTVKKIFVGGIKEDTEEHHLRDYFEQYGKIEVIEIMTDRGSGKKRGFAFVTFDDHDSVDKIVIQKYHTVNGHNCEVRKALSKQEMASASSSQRGRSGSGNFGGGRGGGFGGNDNFGRGGNFSGRGGFGGSRGGGGYGGSGDGYNGFGNDGSNFGGGGSYNDFGNYNNQSSNFGPMKGGNFGGRSSGPYGGGGQYFAKPRNQGGYGGSSSSSSYGSGRRF.

Methionine 1 carries the post-translational modification N-acetylmethionine. N-acetylserine; in Heterogeneous nuclear ribonucleoprotein A1, N-terminally processed is present on serine 2. Position 2 is a phosphoserine (serine 2). Lysine 3 is subject to N6-acetyllysine; alternate. Lysine 3 participates in a covalent cross-link: Glycyl lysine isopeptide (Lys-Gly) (interchain with G-Cter in SUMO2); alternate. A phosphoserine mark is found at serine 4 and serine 6. Residues 4–94 (SESPKEPEQL…EPKRAVSRED (91 aa)) are globular A domain. Lysine 8 is covalently cross-linked (Glycyl lysine isopeptide (Lys-Gly) (interchain with G-Cter in SUMO2)). 2 RRM domains span residues 14-97 (RKLF…DSQR) and 105-184 (KKIF…LSKQ). Serine 22 is subject to Phosphoserine. A Glycyl lysine isopeptide (Lys-Gly) (interchain with G-Cter in SUMO2) cross-link involves residue lysine 78. The segment at 95 to 185 (SQRPGAHLTV…EVRKALSKQE (91 aa)) is globular B domain. Lysine 113 participates in a covalent cross-link: Glycyl lysine isopeptide (Lys-Gly) (interchain with G-Cter in SUMO). Residues lysine 179 and lysine 183 each participate in a glycyl lysine isopeptide (Lys-Gly) (interchain with G-Cter in SUMO2) cross-link. Residues 182–216 (SKQEMASASSSQRGRSGSGNFGGGRGGGFGGNDNF) form a disordered region. Serine 192 is subject to Phosphoserine; by MKNK2. Residue arginine 194 is modified to Asymmetric dimethylarginine; alternate. Arginine 194 carries the dimethylated arginine; alternate modification. Arginine 194 is subject to Omega-N-methylarginine; alternate. Positions 197–216 (SGSGNFGGGRGGGFGGNDNF) are enriched in gly residues. Residue serine 199 is modified to Phosphoserine. Asymmetric dimethylarginine; alternate is present on residues arginine 206, arginine 218, arginine 225, and arginine 232. Dimethylated arginine; alternate is present on arginine 206. An omega-N-methylarginine; alternate mark is found at arginine 206, arginine 218, arginine 225, and arginine 232. The tract at residues 218–240 (RGGNFSGRGGFGGSRGGGGYGGS) is RNA-binding RGG-box. Residue arginine 225 is modified to Dimethylated arginine; alternate. Residues 268–305 (NQSSNFGPMKGGNFGGRSSGPYGGGGQYFAKPRNQGGY) form a nuclear targeting sequence region. The disordered stretch occupies residues 274–320 (GPMKGGNFGGRSSGPYGGGGQYFAKPRNQGGYGGSSSSSSYGSGRRF). The span at 276–294 (MKGGNFGGRSSGPYGGGGQ) shows a compositional bias: gly residues. At arginine 284 the chain carries Omega-N-methylarginine. At serine 285 the chain carries Phosphoserine. Lysine 298 carries the post-translational modification N6-acetyllysine; alternate. Lysine 298 participates in a covalent cross-link: Glycyl lysine isopeptide (Lys-Gly) (interchain with G-Cter in SUMO2); alternate. Arginine 300 is modified (omega-N-methylarginine). A compositionally biased stretch (low complexity) spans 308 to 320 (SSSSSSYGSGRRF). Serine 309 carries the post-translational modification Phosphoserine. Phosphoserine; by MKNK2 is present on residues serine 310, serine 311, and serine 312. 2 positions are modified to phosphoserine: serine 313 and serine 316. Arginine 318 carries the omega-N-methylarginine modification.

Identified in the spliceosome C complex. Identified in a IGF2BP1-dependent mRNP granule complex containing untranslated mRNAs. Interacts with SEPT6. Interacts with C9orf72. Interacts with KHDRBS1. Interacts with UBQLN2. Interacts with PPIA/CYPA. Sumoylated.

It is found in the nucleus. The protein resides in the cytoplasm. Functionally, involved in the packaging of pre-mRNA into hnRNP particles, transport of poly(A) mRNA from the nucleus to the cytoplasm and modulation of splice site selection. Plays a role in the splicing of pyruvate kinase PKM by binding repressively to sequences flanking PKM exon 9, inhibiting exon 9 inclusion and resulting in exon 10 inclusion and production of the PKM M2 isoform. Binds to the IRES and thereby inhibits the translation of the apoptosis protease activating factor APAF1. May bind to specific miRNA hairpins. The protein is Heterogeneous nuclear ribonucleoprotein A1 (Hnrnpa1) of Mus musculus (Mouse).